A 179-amino-acid polypeptide reads, in one-letter code: Inner membrane-spanning protein YciB (179 aa).

The next 6 helical transmembrane spans lie at 3–23, 24–44, 49–69, 76–96, 121–141, and 149–169; these read FLFD…ADIY, TATA…WFRH, PMQW…LVLH, WKPT…VIGW, AAWA…AYQF, and FKLF…SVWL.

The protein belongs to the YciB family.

The protein resides in the cell inner membrane. Plays a role in cell envelope biogenesis, maintenance of cell envelope integrity and membrane homeostasis. In Cupriavidus necator (strain ATCC 17699 / DSM 428 / KCTC 22496 / NCIMB 10442 / H16 / Stanier 337) (Ralstonia eutropha), this protein is Inner membrane-spanning protein YciB.